The chain runs to 437 residues: UDP-N-acetylmuramate--L-alanine ligase (437 aa).

108-114 (GAHGKTS) serves as a coordination point for ATP.

Belongs to the MurCDEF family.

It is found in the cytoplasm. The enzyme catalyses UDP-N-acetyl-alpha-D-muramate + L-alanine + ATP = UDP-N-acetyl-alpha-D-muramoyl-L-alanine + ADP + phosphate + H(+). It functions in the pathway cell wall biogenesis; peptidoglycan biosynthesis. Functionally, cell wall formation. This Staphylococcus aureus (strain MRSA252) protein is UDP-N-acetylmuramate--L-alanine ligase.